The chain runs to 418 residues: Diacylglycerol O-acyltransferase 1 (418 aa).

The segment at 1–30 (MSGTFNDIRRRKKEEGSPTAGITERHENKS) is disordered. The Cytoplasmic portion of the chain corresponds to 1 to 71 (MSGTFNDIRR…LAVAWHTSSF (71 aa)). At S17 the chain carries Phosphoserine. The chain crosses the membrane as a helical span at residues 72 to 92 (VLFSIFTLFAISTPALWVLAI). Residues 93 to 186 (PYMIYFFFDR…DYRNQECTGP (94 aa)) are Lumenal-facing. N-linked (GlcNAc...) asparagine glycosylation occurs at N173. The helical transmembrane segment at 187–207 (TYLFGYHPHGIGALGAFGAFA) threads the bilayer. The Cytoplasmic segment spans residues 208–215 (TEGCNYSK). The chain crosses the membrane as a helical span at residues 216 to 236 (IFPGIPISLMTLVTQFHIPLY). Residues 237–289 (RDYLLALGISSVSRKNALRTLSKNQSICIVVGGARESLLSSTNGTQLILNKRK) lie on the Lumenal side of the membrane. N-linked (GlcNAc...) asparagine glycosylation is found at N260 and N279. Residues 290-310 (GFIKLAIQTGNINLVPVFAFG) form a helical membrane-spanning segment. Topologically, residues 311–418 (EVDCYNVLST…VPDAELKIVG (108 aa)) are cytoplasmic.

This sequence belongs to the diacylglycerol acyltransferase family.

It localises to the lipid droplet. It is found in the endoplasmic reticulum membrane. It carries out the reaction an acyl-CoA + a 1,2-diacyl-sn-glycerol = a triacyl-sn-glycerol + CoA. The enzyme catalyses a 2-acylglycerol + an acyl-CoA = a 1,2-diacylglycerol + CoA. The catalysed reaction is 2-(9Z-octadecenoyl)-glycerol + (9Z)-octadecenoyl-CoA = 1,2-di-(9Z-octadecenoyl)-glycerol + CoA. Its pathway is glycerolipid metabolism; triacylglycerol biosynthesis. Its function is as follows. Catalyzes the terminal and only committed step in triacylglycerol (TAG) synthesis by using diacylglycerol (DAG) and fatty acyl-CoA as substrates. Required for storage lipid synthesis. Major DAG esterifying enzyme in stationary phase when TAG production is particularly active. Involved in lipid particle synthesis from the endoplasmic reticulum, promoting localized TAG production at discrete ER subdomains, and in ergosterol biosynthesis. Also has monoacylglycerol acyltransferase (MGAT) activity, catalyzing the acyl-CoA-dependent esterification of monoacylglycerol to diacylglycerol. Can also utilize ceramide instead of DAG, acylating the ceramides by attaching a fatty acid to the hydroxy group on the first carbon atom of the long-chain base to produce 1-O-acylceramides. The sequence is that of Diacylglycerol O-acyltransferase 1 (DGA1) from Saccharomyces cerevisiae (strain ATCC 204508 / S288c) (Baker's yeast).